The sequence spans 147 residues: Large ribosomal subunit protein uL15 (147 aa).

Residues 1-46 (MSIRLENLSYTPGARKEKHRKGRGHAAGKGKQAGRGQSGQKKRSTV) form a disordered region. Over residues 16–28 (KEKHRKGRGHAAG) the composition is skewed to basic residues.

This sequence belongs to the universal ribosomal protein uL15 family. As to quaternary structure, part of the 50S ribosomal subunit.

In terms of biological role, binds to the 23S rRNA. In Mesomycoplasma hyopneumoniae (strain 232) (Mycoplasma hyopneumoniae), this protein is Large ribosomal subunit protein uL15.